The chain runs to 168 residues: Secretory-abundant heat soluble protein 33020 (168 aa).

The first 19 residues, 1–19 (MARFLVALALFGVVAMTAA), serve as a signal peptide directing secretion. The interval 26–57 (EWSGKPWLGKFVAEVSDKSENWEAFVDALGLP) is SAHS-c1. An SAHS-c2 region spans residues 72–100 (YKQGEHYHHILSLPDKNINKDIEFTLGQE). The SAHS-c3 stretch occupies residues 113–162 (KYFEDGNKLVADVSIPAKGKSIHDVYDVQGDQLIKSYKVGDVVAKKWFKK).

It belongs to the Secretory-abundant heat soluble protein (SAHS) family.

Its subcellular location is the secreted. In terms of biological role, secreted heat soluble protein acting as a molecular shield in water-deficient condition. Tardigrade-specific intrinsically disordered proteins (TDPs) are essential for desiccation tolerance by forming non-crystalline amorphous solids upon desiccation, and this vitrified state mirrors their protective capabilities. In Hypsibius exemplaris (Freshwater tardigrade), this protein is Secretory-abundant heat soluble protein 33020.